Here is a 335-residue protein sequence, read N- to C-terminus: MSLAPEGRRLLRVEARNAEVPVERKPEWIKAKVHMGPEYIGLKNKVKSAGLHTVCEEAGCPNIFECWEDREATFLIGGDICTRRCDFCDITSGKPRPLDMEEPQKVAENIREMDLRYATVTGVARDDQKDGAAWLYAETIRRIHALNPGTGVEILPPDFGAVPELVQQVFDARPEVFAHNLETVPRIFKRIRPAFTYEKSLRVLTMAKADGLVTKSNLILGMGEEDHEIDQALVDLHESGCDIITITQYVRPSKLHHPIDRWVKPQEFVQWSQRAEEIGFQGVMAGPLVRSSYRAGKLYAQAMQRLGRTLPENLAHLAGEKTARQEASAVVAQMS.

The [4Fe-4S] cluster site is built by Cys-55, Cys-60, Cys-66, Cys-81, Cys-85, Cys-88, and Ser-292. The 215-residue stretch at 67 to 281 folds into the Radical SAM core domain; it reads WEDREATFLI…SQRAEEIGFQ (215 aa).

It belongs to the radical SAM superfamily. Lipoyl synthase family. The cofactor is [4Fe-4S] cluster.

It is found in the cytoplasm. It carries out the reaction [[Fe-S] cluster scaffold protein carrying a second [4Fe-4S](2+) cluster] + N(6)-octanoyl-L-lysyl-[protein] + 2 oxidized [2Fe-2S]-[ferredoxin] + 2 S-adenosyl-L-methionine + 4 H(+) = [[Fe-S] cluster scaffold protein] + N(6)-[(R)-dihydrolipoyl]-L-lysyl-[protein] + 4 Fe(3+) + 2 hydrogen sulfide + 2 5'-deoxyadenosine + 2 L-methionine + 2 reduced [2Fe-2S]-[ferredoxin]. It functions in the pathway protein modification; protein lipoylation via endogenous pathway; protein N(6)-(lipoyl)lysine from octanoyl-[acyl-carrier-protein]: step 2/2. In terms of biological role, catalyzes the radical-mediated insertion of two sulfur atoms into the C-6 and C-8 positions of the octanoyl moiety bound to the lipoyl domains of lipoate-dependent enzymes, thereby converting the octanoylated domains into lipoylated derivatives. In Micrococcus luteus (strain ATCC 4698 / DSM 20030 / JCM 1464 / CCM 169 / CCUG 5858 / IAM 1056 / NBRC 3333 / NCIMB 9278 / NCTC 2665 / VKM Ac-2230) (Micrococcus lysodeikticus), this protein is Lipoyl synthase.